Consider the following 183-residue polypeptide: Ribosome-recycling factor (183 aa).

This sequence belongs to the RRF family.

The protein localises to the cytoplasm. Functionally, responsible for the release of ribosomes from messenger RNA at the termination of protein biosynthesis. May increase the efficiency of translation by recycling ribosomes from one round of translation to another. In Acetivibrio thermocellus (strain ATCC 27405 / DSM 1237 / JCM 9322 / NBRC 103400 / NCIMB 10682 / NRRL B-4536 / VPI 7372) (Clostridium thermocellum), this protein is Ribosome-recycling factor.